We begin with the raw amino-acid sequence, 411 residues long: Protein translocase subunit SecY (411 aa).

A run of 10 helical transmembrane segments spans residues 11 to 31 (IIFT…PVPG), 52 to 72 (IFSG…VPYI), 111 to 131 (ALGW…PYVF), 135 to 155 (FAFV…IMWL), 163 to 180 (GIGN…VSGL), 197 to 217 (SLKF…TICV), 253 to 273 (VMPI…TQII), 291 to 311 (LYLL…TSIV), 349 to 369 (TFLG…IEKV), and 377 to 397 (GLGA…AKQI).

The protein belongs to the SecY/SEC61-alpha family. Component of the plastid Sec protein translocase complex, which is composed of at least SecY, SecE and SecG.

It localises to the plastid. The protein resides in the chloroplast thylakoid membrane. In terms of biological role, the central subunit of the protein translocation channel SecYE. Consists of two halves formed by TMs 1-5 and 6-10. These two domains form a lateral gate at the front which open onto the bilayer between TMs 2 and 7, and are clamped together by SecE at the back. The channel is closed by both a pore ring composed of hydrophobic SecY resides and a short helix (helix 2A) on the extracellular side of the membrane which forms a plug. The protein is Protein translocase subunit SecY of Pyropia yezoensis (Susabi-nori).